A 68-amino-acid chain; its full sequence is Large ribosomal subunit protein uL29 (68 aa).

It belongs to the universal ribosomal protein uL29 family.

In Chlorobaculum parvum (strain DSM 263 / NCIMB 8327) (Chlorobium vibrioforme subsp. thiosulfatophilum), this protein is Large ribosomal subunit protein uL29.